A 460-amino-acid polypeptide reads, in one-letter code: Telomere-binding protein homolog (460 aa).

The protein belongs to the telombin family.

The protein localises to the nucleus. Its subcellular location is the chromosome. It is found in the telomere. In terms of biological role, may bind telomeric T4G4 sequences. The sequence is that of Telomere-binding protein homolog from Euplotes crassus.